The chain runs to 250 residues: Probable transcriptional regulatory protein SAV_6832 (250 aa).

Belongs to the TACO1 family.

Its subcellular location is the cytoplasm. In Streptomyces avermitilis (strain ATCC 31267 / DSM 46492 / JCM 5070 / NBRC 14893 / NCIMB 12804 / NRRL 8165 / MA-4680), this protein is Probable transcriptional regulatory protein SAV_6832.